The chain runs to 262 residues: Ribosomal RNA small subunit methyltransferase A (262 aa).

Residues N12, L14, G38, E60, D83, and N102 each contribute to the S-adenosyl-L-methionine site.

Belongs to the class I-like SAM-binding methyltransferase superfamily. rRNA adenine N(6)-methyltransferase family. RsmA subfamily.

Its subcellular location is the cytoplasm. It catalyses the reaction adenosine(1518)/adenosine(1519) in 16S rRNA + 4 S-adenosyl-L-methionine = N(6)-dimethyladenosine(1518)/N(6)-dimethyladenosine(1519) in 16S rRNA + 4 S-adenosyl-L-homocysteine + 4 H(+). Its function is as follows. Specifically dimethylates two adjacent adenosines (A1518 and A1519) in the loop of a conserved hairpin near the 3'-end of 16S rRNA in the 30S particle. May play a critical role in biogenesis of 30S subunits. The chain is Ribosomal RNA small subunit methyltransferase A from Pelagibacter ubique (strain HTCC1062).